Reading from the N-terminus, the 499-residue chain is NAD(P)H-quinone oxidoreductase chain 4, chloroplastic (499 aa).

A run of 14 helical transmembrane segments spans residues 4-24 (LPWL…IPLF), 31-51 (MIRW…TYIF), 87-107 (IGLI…AWPV), 113-130 (LLHF…GLFA), 134-154 (ILLF…LLSM), 167-187 (FLLY…SMGL), 211-231 (ILLY…FPLH), 242-262 (HYST…YGLI), 274-294 (SLFS…AALT), 305-325 (IAYS…SMTY), 330-350 (GAIL…FLVG), 386-406 (LALP…GVIT), 416-436 (IIIT…LLSM), and 462-482 (LFIL…PDLV).

The protein belongs to the complex I subunit 4 family.

It is found in the plastid. Its subcellular location is the chloroplast thylakoid membrane. The enzyme catalyses a plastoquinone + NADH + (n+1) H(+)(in) = a plastoquinol + NAD(+) + n H(+)(out). It carries out the reaction a plastoquinone + NADPH + (n+1) H(+)(in) = a plastoquinol + NADP(+) + n H(+)(out). The sequence is that of NAD(P)H-quinone oxidoreductase chain 4, chloroplastic from Cryptomeria japonica (Japanese cedar).